Reading from the N-terminus, the 495-residue chain is Amorpha-4,11-diene 12-monooxygenase (495 aa).

Residues 1–6 are Cytoplasmic-facing; that stretch reads MKSILK. Residues 7 to 29 form a helical; Signal-anchor for type II membrane protein membrane-spanning segment; that stretch reads AMALSLTTSIALATILLFVYKFA. At 30–495 the chain is on the lumenal side; the sequence is TRSKSTKKSL…KTELLLVPSF (466 aa). Asparagine 176, asparagine 261, asparagine 267, asparagine 386, and asparagine 417 each carry an N-linked (GlcNAc...) asparagine glycan. Cysteine 439 is a binding site for heme.

The protein belongs to the cytochrome P450 family. The cofactor is heme. In terms of tissue distribution, highly expressed both in apical and sub-apical cells of glandular secretory trichomes. Detected in flower buds, leaves and roots. Also present in non-glandular trichome cells.

Its subcellular location is the endoplasmic reticulum membrane. The catalysed reaction is (+)-amorpha-4,11-diene + 3 reduced [NADPH--hemoprotein reductase] + 3 O2 = (+)-artemisinate + 3 oxidized [NADPH--hemoprotein reductase] + 4 H2O + 4 H(+). It functions in the pathway sesquiterpene biosynthesis. Involved in the biosynthesis of the antimalarial endoperoxide artemisinin. Catalyzes three consecutive oxidations of amorpha-4,11-diene to produce artemisinic acid, with artemisinic alcohol and artemisinic aldehyde as intermediates products, but is unable to oxidize germacrene A. No activity with limonene, alpha-pinene, beta-pinene, pinocarveol, (-)-alloisolongifolene, caryophyllene, (-)-alpha-gurjunene, (+)-gamma-gurjunene, (+)-ledene, (+)-beta-selinene and (+)-valencene as substrates. The chain is Amorpha-4,11-diene 12-monooxygenase from Artemisia annua (Sweet wormwood).